A 343-amino-acid chain; its full sequence is Anthranilate phosphoribosyltransferase (343 aa).

5-phospho-alpha-D-ribose 1-diphosphate is bound by residues Gly84, 87 to 88, Thr92, 94 to 97, 112 to 120, and Ser124; these read GD, NIST, and KHGNRGVSS. Position 84 (Gly84) interacts with anthranilate. Ser96 lines the Mg(2+) pocket. Asn115 contacts anthranilate. Arg170 serves as a coordination point for anthranilate. 2 residues coordinate Mg(2+): Asp229 and Glu230.

It belongs to the anthranilate phosphoribosyltransferase family. As to quaternary structure, homodimer. It depends on Mg(2+) as a cofactor.

The catalysed reaction is N-(5-phospho-beta-D-ribosyl)anthranilate + diphosphate = 5-phospho-alpha-D-ribose 1-diphosphate + anthranilate. Its pathway is amino-acid biosynthesis; L-tryptophan biosynthesis; L-tryptophan from chorismate: step 2/5. Catalyzes the transfer of the phosphoribosyl group of 5-phosphorylribose-1-pyrophosphate (PRPP) to anthranilate to yield N-(5'-phosphoribosyl)-anthranilate (PRA). The protein is Anthranilate phosphoribosyltransferase of Burkholderia cenocepacia (strain ATCC BAA-245 / DSM 16553 / LMG 16656 / NCTC 13227 / J2315 / CF5610) (Burkholderia cepacia (strain J2315)).